The primary structure comprises 161 residues: Bifurcating [FeFe] hydrogenase gamma subunit (161 aa).

[2Fe-2S] cluster is bound by residues C78, C83, C119, and C123.

Belongs to the complex I 24 kDa subunit family. Heterotrimer composed of HydA (alpha subunit), HydB (beta subunit) and HydC (gamma subunit). Near neutral and acidic pH conditions favor oligomerization of the heterotrimeric holoenzyme. It depends on [2Fe-2S] cluster as a cofactor.

The protein localises to the cytoplasm. The enzyme catalyses 2 H2 + 2 oxidized [2Fe-2S]-[ferredoxin] + NAD(+) = 2 reduced [2Fe-2S]-[ferredoxin] + NADH + 3 H(+). Catalyzes the oxidation of the physiological electron carriers NADH and reduced ferredoxin, coupled to the production of H(2). Acts as a bifurcating [FeFe] hydrogenase, which uses the exergonic oxidation of reduced ferredoxin to drive the unfavorable oxidation of NADH to produce H(2). The gamma subunit might be the site where reduced ferredoxin is oxidized. The protein is Bifurcating [FeFe] hydrogenase gamma subunit of Thermotoga maritima (strain ATCC 43589 / DSM 3109 / JCM 10099 / NBRC 100826 / MSB8).